A 381-amino-acid polypeptide reads, in one-letter code: Subtilisin E (381 aa).

The N-terminal stretch at 1–29 (MRSKKLWISLLFALTLIFTMAFSNMSAQA) is a signal peptide. A propeptide spanning residues 30-106 (AGKSSTEKKY…VEEDHIAHEY (77 aa)) is cleaved from the precursor. In terms of domain architecture, Inhibitor I9 spans 38 to 103 (KYIVGFKQTM…VAYVEEDHIA (66 aa)). Position 108 (Q108) interacts with Ca(2+). One can recognise a Peptidase S8 domain in the interval 111-380 (PYGISQIKAP…KGLINVQAAA (270 aa)). D138 serves as the catalytic Charge relay system. D147 contributes to the Ca(2+) binding site. H170 functions as the Charge relay system in the catalytic mechanism. L181, N183, I185, V187, A275, Y277, T280, and D303 together coordinate Ca(2+). Catalysis depends on S327, which acts as the Charge relay system.

This sequence belongs to the peptidase S8 family. Ca(2+) serves as cofactor.

It is found in the secreted. It catalyses the reaction Hydrolysis of proteins with broad specificity for peptide bonds, and a preference for a large uncharged residue in P1. Hydrolyzes peptide amides.. Its activity is regulated as follows. Inhibited by PMSF (phenylmethylsulphonyl fluoride) and 3,4-dichloroisocoumarin but not by EDTA (shown for strain RT-5). In terms of biological role, an extracellular alkaline serine protease, it catalyzes the hydrolysis of proteins and peptide amides. This is Subtilisin E from Bacillus subtilis (strain 168).